We begin with the raw amino-acid sequence, 388 residues long: Succinate--CoA ligase [ADP-forming] subunit beta (388 aa).

The 236-residue stretch at 9-244 (KQLFAEFGLP…PSQEDEREAH (236 aa)) folds into the ATP-grasp domain. Residues K46, 53 to 55 (GRG), E99, S102, and E107 contribute to the ATP site. Mg(2+) is bound by residues N199 and D213. Substrate contacts are provided by residues N264 and 321 to 323 (GIV).

The protein belongs to the succinate/malate CoA ligase beta subunit family. As to quaternary structure, heterotetramer of two alpha and two beta subunits. It depends on Mg(2+) as a cofactor.

It carries out the reaction succinate + ATP + CoA = succinyl-CoA + ADP + phosphate. The catalysed reaction is GTP + succinate + CoA = succinyl-CoA + GDP + phosphate. The protein operates within carbohydrate metabolism; tricarboxylic acid cycle; succinate from succinyl-CoA (ligase route): step 1/1. Functionally, succinyl-CoA synthetase functions in the citric acid cycle (TCA), coupling the hydrolysis of succinyl-CoA to the synthesis of either ATP or GTP and thus represents the only step of substrate-level phosphorylation in the TCA. The beta subunit provides nucleotide specificity of the enzyme and binds the substrate succinate, while the binding sites for coenzyme A and phosphate are found in the alpha subunit. In Vibrio atlanticus (strain LGP32) (Vibrio splendidus (strain Mel32)), this protein is Succinate--CoA ligase [ADP-forming] subunit beta.